A 1009-amino-acid chain; its full sequence is METDQDMHDQAMAGEETDLDEKYPNRPQNKAPTLPFHDLYETLFRPLREIKKKPVGPAGNRRKAGPHGLSAANLNPIERRRDIIERFISRWRKEVGDDIYPAFRLILPDKDRDRAMYGMKEKIIGKMLVNIMKIDKNSEDGFNLLNWKLPGQSATSSMAGDFAGRCYDVVSKRPMRTEFGNMLIEEVNEKLDQLSSASKEEEQLPILAEFYRRMNPEELAWLIRIILRQMKLGATERTFFDVWHPDAENLYSISSSLRRVCWELHDPNIRLDAEDRGVSLMQCFQPQLAQFQMQSLDRMIARMRPTEDDPVFWIEEKLDGERMQLHMVSDASAPGGRRFRFWSRKAKDYTYLYGNGIYDEAGSLTRHLKDAFADGVDNLILDGEMITWNTEQDAPEPFGTLKTAALSEQRNPFRQGIHPLFRVFDILYLNGRDLTRYTLRDRRNALQKVIKPVHRRFEVHSYEEATTKAEVEASLRKAVAEASEGLVLKNPRSPYRLNERHDDWMKVKPEYMTEFGESLDLVVIGGYYGSGHRGGKLSSFLCGLRVDEGQSSQGSNPTKCYSFCKVGGGFTAADYANIRHHTDGKWVEWNPKKPPTTYIELAGGDSQYERPDMWIKPEDSVVICVKAASVSVSDQFRIGLTLRFPRFKRLRMDKDWKSALSVQEFLDLKSHAEQEHREKEFNVENFRKKRVKKTTKKPLAIAGYDENAEVQYAGPSGHIFDGLNFFILTDSNAPVKKSKAELENLVKANGGRIFQTNDAVPDTICIADRRTVKAASLQKKGDIDIIRPSWILDCIKQSEIDAGLPDLLLPLEPGHMFFMTKDKEEIVAGSLDQFNDSYARDITVEELRNLLDQMAKDGKTDSFCSPEAIQKVTEHIQEKVDSGWTMPCGWLFKGLVLCFPENENDSASEGPEPKQSQRIHLAQNTAKFAGASVTTSLKDTSITHVVVDPDFTSSELPKLRRTLSTRRKLPHIVKVNWIEDSWKENTLLDEEQHMPVYMRRYPNIQLMKV.

Disordered stretches follow at residues 1-34 (METD…APTL) and 51-72 (KKKP…LSAA). Over residues 51 to 65 (KKKPVGPAGNRRKAG) the composition is skewed to basic residues. Residues glutamate 315, lysine 317, leucine 318, arginine 322, glutamate 384, phenylalanine 424, glutamate 484, lysine 489, lysine 506, and lysine 508 each coordinate ATP. The active-site N6-AMP-lysine intermediate is the lysine 317. Glutamate 384 contributes to the Mg(2+) binding site. Glutamate 484 lines the Mg(2+) pocket. BRCT domains lie at 715 to 808 (PSGH…PDLL) and 887 to 995 (PCGW…QHMP).

Belongs to the ATP-dependent DNA ligase family. It depends on Mg(2+) as a cofactor.

The protein localises to the nucleus. The enzyme catalyses ATP + (deoxyribonucleotide)n-3'-hydroxyl + 5'-phospho-(deoxyribonucleotide)m = (deoxyribonucleotide)n+m + AMP + diphosphate.. In terms of biological role, DNA ligase involved in DNA non-homologous end joining (NHEJ); required for double-strand break (DSB) repair. This is DNA ligase 4 (lig4) from Emericella nidulans (strain FGSC A4 / ATCC 38163 / CBS 112.46 / NRRL 194 / M139) (Aspergillus nidulans).